The following is an 868-amino-acid chain: Rifampicin phosphotransferase (868 aa).

The ATP-binding stretch occupies residues 1-313 (MSSFVLDFQE…IYIVQSRPIT (313 aa)). ATP contacts are provided by Lys-22, Arg-116, Gly-131, Thr-135, Gln-182, Glu-296, Gln-308, and Arg-310. The segment at 326–756 (NHVYISVGHQ…TSDGEIITGK (431 aa)) is rifampicin-binding. The swivel phosphohistidine stretch occupies residues 769–867 (GLPVSSGVVE…VHGTEGYIEV (99 aa)). His-827 (tele-phosphohistidine intermediate) is an active-site residue.

It belongs to the rifampicin phosphotransferase family.

It carries out the reaction rifampicin + ATP + H2O = 21-phosphorifampicin + AMP + phosphate + 2 H(+). Catalyzes the phosphorylation of rifampicin, also known as rifampin (RIF), leading to its inactivation. Confers high level resistance to a variety of clinically used rifamycin antibiotics. Does not show phosphoenolpyruvate (PEP) synthase activity. The chain is Rifampicin phosphotransferase from Bacillus cereus (strain ATCC 14579 / DSM 31 / CCUG 7414 / JCM 2152 / NBRC 15305 / NCIMB 9373 / NCTC 2599 / NRRL B-3711).